A 518-amino-acid chain; its full sequence is Triacylglycerol lipase OBL1 (518 aa).

The helical transmembrane segment at 93-113 (GFVVDFFLNLFSANGGFFGLL) threads the bilayer. The short motif at 337–341 (GHSLG) is the GXSXG element. Ser339 functions as the Nucleophile in the catalytic mechanism. Catalysis depends on charge relay system residues Asp403 and His496.

It belongs to the AB hydrolase superfamily. Lipase family. As to expression, expressed in pollen grains, pollen tubes, developing embryos, developing seeds and germinating seeds.

The protein localises to the lipid droplet. It localises to the membrane. The catalysed reaction is 1,2-di-(9Z-octadecenoyl)-glycerol + (9Z)-octadecenoate + H(+) = 1,2,3-tri-(9Z-octadecenoyl)-glycerol + H2O. It catalyses the reaction 1-(9Z-octadecenoyl)-glycerol + H2O = glycerol + (9Z)-octadecenoate + H(+). Functionally, acid lipase that can hydrolyze a range of triacylglycerols without a clear preference for acyl-chains. Can also cleave 1,2-diacylglycerol, 1,3-diacylglycerol and 1-monoacylglycerol, but not phosphatidylcholine, phosphatidylethanolamine, or sterol esters. Required for pollen tube growth. Triacylglycerol hydrolysis by OBL1 may provide acyl groups for the synthesis of membrane lipids in growing pollen tubes. The chain is Triacylglycerol lipase OBL1 from Arabidopsis thaliana (Mouse-ear cress).